The following is a 748-amino-acid chain: Basic juvenile hormone-suppressible protein 1 (748 aa).

The signal sequence occupies residues 1–17; that stretch reads MRVLVLVASLGLRGSVV.

This sequence belongs to the hemocyanin family. Fat body, and hemolymph of larvae.

This is Basic juvenile hormone-suppressible protein 1 (BJSP-1) from Trichoplusia ni (Cabbage looper).